Consider the following 237-residue polypeptide: Pyridoxal 5'-phosphate synthase subunit PdxS (237 aa).

Lysine 19 functions as the Schiff-base intermediate with D-ribose 5-phosphate in the catalytic mechanism. Residue glycine 91 coordinates D-ribose 5-phosphate. Residue arginine 103 participates in D-glyceraldehyde 3-phosphate binding. D-ribose 5-phosphate is bound by residues glycine 157 and glycine 178–serine 179.

This sequence belongs to the PdxS/SNZ family. In the presence of PdxT, forms a dodecamer of heterodimers.

It carries out the reaction aldehydo-D-ribose 5-phosphate + D-glyceraldehyde 3-phosphate + L-glutamine = pyridoxal 5'-phosphate + L-glutamate + phosphate + 3 H2O + H(+). The protein operates within cofactor biosynthesis; pyridoxal 5'-phosphate biosynthesis. In terms of biological role, catalyzes the formation of pyridoxal 5'-phosphate from ribose 5-phosphate (RBP), glyceraldehyde 3-phosphate (G3P) and ammonia. The ammonia is provided by the PdxT subunit. Can also use ribulose 5-phosphate and dihydroxyacetone phosphate as substrates, resulting from enzyme-catalyzed isomerization of RBP and G3P, respectively. The protein is Pyridoxal 5'-phosphate synthase subunit PdxS of Methanococcus vannielii.